The following is a 370-amino-acid chain: Queuine tRNA-ribosyltransferase (370 aa).

Asp-89 serves as the catalytic Proton acceptor. Residues 89–93, Asp-143, Gln-187, and Gly-214 each bind substrate; that span reads DSGGF. Residues 245–251 are RNA binding; sequence GVGTPED. Residue Asp-264 is the Nucleophile of the active site. The tract at residues 269-273 is RNA binding; important for wobble base 34 recognition; it reads TRNAR. Zn(2+) contacts are provided by Cys-302, Cys-304, Cys-307, and His-333.

The protein belongs to the queuine tRNA-ribosyltransferase family. As to quaternary structure, homodimer. Within each dimer, one monomer is responsible for RNA recognition and catalysis, while the other monomer binds to the replacement base PreQ1. Requires Zn(2+) as cofactor.

The enzyme catalyses 7-aminomethyl-7-carbaguanine + guanosine(34) in tRNA = 7-aminomethyl-7-carbaguanosine(34) in tRNA + guanine. Its pathway is tRNA modification; tRNA-queuosine biosynthesis. Functionally, catalyzes the base-exchange of a guanine (G) residue with the queuine precursor 7-aminomethyl-7-deazaguanine (PreQ1) at position 34 (anticodon wobble position) in tRNAs with GU(N) anticodons (tRNA-Asp, -Asn, -His and -Tyr). Catalysis occurs through a double-displacement mechanism. The nucleophile active site attacks the C1' of nucleotide 34 to detach the guanine base from the RNA, forming a covalent enzyme-RNA intermediate. The proton acceptor active site deprotonates the incoming PreQ1, allowing a nucleophilic attack on the C1' of the ribose to form the product. After dissociation, two additional enzymatic reactions on the tRNA convert PreQ1 to queuine (Q), resulting in the hypermodified nucleoside queuosine (7-(((4,5-cis-dihydroxy-2-cyclopenten-1-yl)amino)methyl)-7-deazaguanosine). This is Queuine tRNA-ribosyltransferase from Aromatoleum aromaticum (strain DSM 19018 / LMG 30748 / EbN1) (Azoarcus sp. (strain EbN1)).